Reading from the N-terminus, the 76-residue chain is Alpha/kappa-conotoxin-like pl14.3 (76 aa).

The first 27 residues, 1–27 (MPSVRSVACCCLLWMMLSVQLVTPGSP), serve as a signal peptide directing secretion. Residues 28-39 (ATAQLSGQRTAR) constitute a propeptide that is removed on maturation. Cystine bridges form between Cys46-Cys61 and Cys50-Cys63. The residue at position 64 (Asp64) is an Aspartic acid 1-amide. Residues 65–76 (GKRDVVSSSMAV) constitute a propeptide that is removed on maturation.

Belongs to the conotoxin J superfamily. In terms of tissue distribution, expressed by the venom duct.

It localises to the secreted. In terms of biological role, highly inhibits both nicotinic acetylcholine receptors (neuronal (alpha-3/beta-4) and muscular (alpha-1/beta-1/epsilon/delta) subtypes) and the voltage-gated potassium channel Kv1.6/KCNA6 subtype. The chain is Alpha/kappa-conotoxin-like pl14.3 from Conus planorbis (Planorbis cone).